The following is a 201-amino-acid chain: UPF0323 lipoprotein Cj0371 (201 aa).

The first 26 residues, 1 to 26 (MKKIKKIIQIGMIGGLAAVAGGALAG), serve as a signal peptide directing secretion. Cys27 carries N-palmitoyl cysteine lipidation. Residue Cys27 is the site of S-diacylglycerol cysteine attachment. The segment at 169–201 (NKAGTTSSASSAKKSGFFGGGSKATSSSSSFGS) is disordered. Composition is skewed to low complexity over residues 170–184 (KAGT…KKSG) and 191–201 (KATSSSSSFGS).

It belongs to the UPF0323 family.

Its subcellular location is the cell membrane. This is UPF0323 lipoprotein Cj0371 from Campylobacter jejuni subsp. jejuni serotype O:2 (strain ATCC 700819 / NCTC 11168).